The following is a 1489-amino-acid chain: WD repeat-containing protein 7 (1489 aa).

WD repeat units follow at residues 17 to 56 (APTH…EVNP), 62 to 104 (GHTA…CIEF), 156 to 199 (ISPD…SGMQ), 324 to 366 (VICP…EKQE), 404 to 443 (NEPL…IVQL), 462 to 507 (GHRN…MKHI), and 558 to 597 (RHLF…LDRC). Disordered stretches follow at residues 754–783 (IKEH…YRAS) and 911–947 (GDHM…QGQI). The span at 767 to 782 (EARRQSREDSDPEYRA) shows a compositional bias: basic and acidic residues. A Phosphoserine modification is found at serine 935. WD repeat units follow at residues 1350 to 1389 (PAIC…CQTI) and 1391 to 1431 (GHKG…LGSI). A Phosphoserine modification is found at serine 1455.

This is WD repeat-containing protein 7 (Wdr7) from Mus musculus (Mouse).